A 308-amino-acid chain; its full sequence is Probable manganese-dependent inorganic pyrophosphatase (308 aa).

Positions 9, 13, 15, 75, 97, and 149 each coordinate Mn(2+).

This sequence belongs to the PPase class C family. It depends on Mn(2+) as a cofactor.

It localises to the cytoplasm. The catalysed reaction is diphosphate + H2O = 2 phosphate + H(+). This Listeria welshimeri serovar 6b (strain ATCC 35897 / DSM 20650 / CCUG 15529 / CIP 8149 / NCTC 11857 / SLCC 5334 / V8) protein is Probable manganese-dependent inorganic pyrophosphatase.